The primary structure comprises 1590 residues: MPGGACVLVIALMFLAWGEAQECSPGGHQFLRSPYRSVRFDSWHLQQSAVQDLICDHSLSPGWYRFLILDRPAEMPTKCVEMNHCGTQAPIWLSLRDSETLPSPGEIKQLTACATWQFLFSTTKDCCLFQIPVSVRNCGNFSVYLLQPTQGCMGYCAEAISDARLHPCGSDETETGGDCVRQLAASLPPPPAGRPEVLVELIESRLFCRCSFDVPATKNSVGFHIAWSRLSSQEVKEELTQETTVQAFSLLELDGINLRLGDRIFCSASVFFLENPHVQSVAIESQEFFAGFKLQPELSTISEDGKEYYLRIESTVPIICSEFSELDQECKISLKLKTIGQGREHLGLNLALSSCHVDLLQTSSCANGTCSHTFVYYTAVTDFSRDGDRVSNIVVQPIVNEDFLWNNYIPDSIQIKVKDVPTAYCYTFTDPHIITFDGRVYDNFKTGTFVLYKSMSRDFEVHVRQWDCRSLHYPVSCNCGFVAQEGGDIVTFDMCNGQLRESQPYLFIKSQDVTRNIKISESYLGRKVTIWFSSGAFIRADLGEWGMSLTIRAPSVDYRNTLGLCGTFDENPENDFHDKNGMQIDQNFNNYVAFINEWRILPGKSMSDTLPVSMTSPGKPSYCSCSLDTAAYPSSEDLDSVSRSEIALGCKDLNHVSLSSLIPELDVTSEYINSDTLVREINKHTSPEEYNLNLFLQEKKHINLTKLGLNVQKHPGNEKEDSLQYLANKKYTQGRGSHSQEMRYNRQNRWKRQNFHEFPPLFAFPSLSQTDLEELTYFFPEDHAEDVQQEFFPSWPTPSGLTEYSTLTLCQETLANSSIGRLCLAFLGKRLDSVIEMCVKDVLLKDDLSWAEAGVALLENECEKRIVEEGKYNTEEYGTSIEDILSVLKCPNLCSGNGQCMEWGCACSPSFSSYDCSDSYDKAPEITELGNAGFCDVQKYNCMMVRVFGKGFKELPSIKCEVTKLQYNSSEWMPGEPIYTQTVFHNSRAVDCQLPTDVQQFDTMDLVGGKPTGKWQLKVSNDGYKFSNPKITVIYDGACQVCGLYKNDSCTIKENVCIIDGLCYVEGDKNPTSPCLICRPKISRFTWSFLENNQPPVIQALQDKLQTFYGENFEYQFVAFDPEGSDIHFTLDSGPEGASVSSAGLFMWKTDLLTTQQITVRLNDDCDAETRVTIEVTVKSCDCLNGGSCVSDRNFSPGSGVYLCVCLPGFHGSLCEVDISGCQSNPCGLGSYISGFHSYSCDCPPELKVETQFVNQFTTQTVVLTRSDKSVNKEEDDKNAQGRKRHVKPTSGNAFTICKYPCGKSRECVAPNICKCKPGYIGSNCQTALCDPDCKNHGKCIKPNICQCLPGHGGATCDEEHCNPPCQHGGTCLAGNLCTCPYGFVGPRCETMVCNRHCENGGQCLTPDICQCKPGWYGPTCSTALCDPVCLNGGSCNKPNTCLCPNGFFGEHCQNAFCHPPCKNGGHCMRNNVCVCREGYTGRRFQKSICDPTCMNGGKCVGPSTCSCPSGWSGKRCNTPICLQKCKNGGECIAPSICHCPSSWEGVRCQIPICNPKCLYGGRCIFPNVCSCRTEYSGVKCEKKIQIRRH.

The N-terminal stretch at 1 to 20 is a signal peptide; sequence MPGGACVLVIALMFLAWGEA. N-linked (GlcNAc...) asparagine glycosylation occurs at Asn367. The VWFD domain occupies 423-606; sequence AYCYTFTDPH…EWRILPGKSM (184 aa). 2 disulfides stabilise this stretch: Cys425–Cys565 and Cys468–Cys477. 2 N-linked (GlcNAc...) asparagine glycosylation sites follow: Asn703 and Asn968. Residues 1177–1216 form the EGF-like 1 domain; sequence TVKSCDCLNGGSCVSDRNFSPGSGVYLCVCLPGFHGSLCE. 3 cysteine pairs are disulfide-bonded: Cys1181/Cys1189, Cys1183/Cys1204, and Cys1206/Cys1215. The span at 1268–1280 shows a compositional bias: basic and acidic residues; the sequence is DKSVNKEEDDKNA. The tract at residues 1268 to 1288 is disordered; the sequence is DKSVNKEEDDKNAQGRKRHVK. 6 consecutive EGF-like domains span residues 1294 to 1326, 1358 to 1390, 1422 to 1454, 1455 to 1486, 1518 to 1550, and 1551 to 1582; these read AFTI…SNCQ, DEEH…PRCE, STAL…EHCQ, NAFC…RRFQ, NTPI…VRCQ, and IPIC…VKCE. 17 disulfide bridges follow: Cys1298-Cys1308, Cys1302-Cys1314, Cys1316-Cys1325, Cys1362-Cys1372, Cys1366-Cys1378, Cys1380-Cys1389, Cys1426-Cys1436, Cys1430-Cys1442, Cys1444-Cys1453, Cys1458-Cys1468, Cys1462-Cys1474, Cys1522-Cys1532, Cys1526-Cys1538, Cys1540-Cys1549, Cys1554-Cys1564, Cys1558-Cys1570, and Cys1572-Cys1581.

Its subcellular location is the secreted. The chain is von Willebrand factor D and EGF domain-containing protein (VWDE) from Homo sapiens (Human).